The primary structure comprises 213 residues: Charged multivesicular body protein 2b (213 aa).

Position 2 is an N-acetylalanine (Ala2). Positions 25-55 (QRAIIRDRAALEKQEKQLELEIKKMAKIGNK) form a coiled coil. Residues 178 to 202 (MAKAPSAARSLPSASTSKSTISDEE) are disordered. Residues 179–194 (AKAPSAARSLPSASTS) are compositionally biased toward low complexity. At Ser199 the chain carries Phosphoserine. The MIT-interacting motif motif lies at 201–211 (EEIERQLKALG).

Belongs to the SNF7 family. Probable core component of the endosomal sorting required for transport complex III (ESCRT-III). ESCRT-III components are thought to multimerize to form a flat lattice on the perimeter membrane of the endosome. Several assembly forms of ESCRT-III may exist that interact and act sequentially. Interacts with CHMP2A. Interacts with VPS4A. Interacts with VPS4B; the interaction is direct.

The protein localises to the cytoplasm. Its subcellular location is the cytosol. It localises to the late endosome membrane. Its function is as follows. Probable core component of the endosomal sorting required for transport complex III (ESCRT-III) which is involved in multivesicular bodies (MVBs) formation and sorting of endosomal cargo proteins into MVBs. MVBs contain intraluminal vesicles (ILVs) that are generated by invagination and scission from the limiting membrane of the endosome and mostly are delivered to lysosomes enabling degradation of membrane proteins, such as stimulated growth factor receptors, lysosomal enzymes and lipids. The MVB pathway appears to require the sequential function of ESCRT-O, -I,-II and -III complexes. ESCRT-III proteins mostly dissociate from the invaginating membrane before the ILV is released. The ESCRT machinery also functions in topologically equivalent membrane fission events, such as the terminal stages of cytokinesis and the budding of enveloped viruses (lentiviruses). ESCRT-III proteins are believed to mediate the necessary vesicle extrusion and/or membrane fission activities, possibly in conjunction with the AAA ATPase VPS4. The sequence is that of Charged multivesicular body protein 2b (CHMP2B) from Bos taurus (Bovine).